A 644-amino-acid polypeptide reads, in one-letter code: Heat shock protein SSC3, mitochondrial (644 aa).

Belongs to the heat shock protein 70 family.

The protein resides in the mitochondrion matrix. Its subcellular location is the mitochondrion nucleoid. Its function is as follows. Plays a role in facilitating the assembly of some protein complexes inside the mitochondria. It may initiate the events that lead to refolding of imported precursors in the matrix space. This chain is Heat shock protein SSC3, mitochondrial (ECM10), found in Saccharomyces cerevisiae (strain ATCC 204508 / S288c) (Baker's yeast).